We begin with the raw amino-acid sequence, 501 residues long: Cytochrome P450 2J5 (501 aa).

Cysteine 447 contacts heme.

The protein belongs to the cytochrome P450 family. Requires heme as cofactor.

The protein resides in the endoplasmic reticulum membrane. The protein localises to the microsome membrane. The catalysed reaction is an organic molecule + reduced [NADPH--hemoprotein reductase] + O2 = an alcohol + oxidized [NADPH--hemoprotein reductase] + H2O + H(+). The sequence is that of Cytochrome P450 2J5 (Cyp2j5) from Mus musculus (Mouse).